Reading from the N-terminus, the 505-residue chain is Maturase K (505 aa).

Belongs to the intron maturase 2 family. MatK subfamily.

The protein resides in the plastid. Its subcellular location is the chloroplast. In terms of biological role, usually encoded in the trnK tRNA gene intron. Probably assists in splicing its own and other chloroplast group II introns. This is Maturase K from Nuphar variegata (Yellow pond lily).